Reading from the N-terminus, the 198-residue chain is NADH-quinone oxidoreductase subunit C (198 aa).

This sequence belongs to the complex I 30 kDa subunit family. In terms of assembly, NDH-1 is composed of 14 different subunits. Subunits NuoB, C, D, E, F, and G constitute the peripheral sector of the complex.

The protein localises to the cell inner membrane. It catalyses the reaction a quinone + NADH + 5 H(+)(in) = a quinol + NAD(+) + 4 H(+)(out). Its function is as follows. NDH-1 shuttles electrons from NADH, via FMN and iron-sulfur (Fe-S) centers, to quinones in the respiratory chain. The immediate electron acceptor for the enzyme in this species is believed to be ubiquinone. Couples the redox reaction to proton translocation (for every two electrons transferred, four hydrogen ions are translocated across the cytoplasmic membrane), and thus conserves the redox energy in a proton gradient. This chain is NADH-quinone oxidoreductase subunit C, found in Herminiimonas arsenicoxydans.